The primary structure comprises 403 residues: Phosphoglycerate kinase (403 aa).

Residues 24 to 26 (DLN), Arg-39, 62 to 65 (HLGR), Arg-121, and Arg-161 each bind substrate. ATP is bound by residues Lys-211, Gly-299, Glu-330, and 359–362 (GGDS).

This sequence belongs to the phosphoglycerate kinase family. Monomer.

It localises to the cytoplasm. It catalyses the reaction (2R)-3-phosphoglycerate + ATP = (2R)-3-phospho-glyceroyl phosphate + ADP. It functions in the pathway carbohydrate degradation; glycolysis; pyruvate from D-glyceraldehyde 3-phosphate: step 2/5. The polypeptide is Phosphoglycerate kinase (Corynebacterium jeikeium (strain K411)).